We begin with the raw amino-acid sequence, 155 residues long: MSTPTQSLQVKLLDPRFGDLWPLPAYATESSAGMDLRAALEAPMTLQPGDAALIPSGIAIHLADPQLCAVILPRSGLGHRHGIVLGNGTGLIDADYQGPLLISTWNRGREAFTIEPGDRIAQLVILPIVRAGLQVVDTFVDSARGAGGFGHTGVR.

Substrate-binding positions include R74–G76, N87, and L91–D93.

Belongs to the dUTPase family. It depends on Mg(2+) as a cofactor.

The enzyme catalyses dUTP + H2O = dUMP + diphosphate + H(+). Its pathway is pyrimidine metabolism; dUMP biosynthesis; dUMP from dCTP (dUTP route): step 2/2. Functionally, this enzyme is involved in nucleotide metabolism: it produces dUMP, the immediate precursor of thymidine nucleotides and it decreases the intracellular concentration of dUTP so that uracil cannot be incorporated into DNA. The chain is Deoxyuridine 5'-triphosphate nucleotidohydrolase from Xanthomonas oryzae pv. oryzae (strain MAFF 311018).